Consider the following 89-residue polypeptide: DNA/RNA-binding protein Alba (89 aa).

The protein belongs to the histone-like Alba family.

The protein localises to the cytoplasm. It is found in the chromosome. In terms of biological role, binds double-stranded DNA tightly but without sequence specificity. Involved in DNA compaction. This chain is DNA/RNA-binding protein Alba, found in Methanothrix thermoacetophila (strain DSM 6194 / JCM 14653 / NBRC 101360 / PT) (Methanosaeta thermophila).